Here is a 1043-residue protein sequence, read N- to C-terminus: Isoleucine--tRNA ligase (1043 aa).

A 'HIGH' region motif is present at residues 49–59 (PFATGLPHYGH). The short motif at 592-596 (KMSKR) is the 'KMSKS' region element. Lysine 595 lines the ATP pocket.

This sequence belongs to the class-I aminoacyl-tRNA synthetase family. IleS type 2 subfamily. Monomer. Zn(2+) serves as cofactor.

Its subcellular location is the cytoplasm. It catalyses the reaction tRNA(Ile) + L-isoleucine + ATP = L-isoleucyl-tRNA(Ile) + AMP + diphosphate. Catalyzes the attachment of isoleucine to tRNA(Ile). As IleRS can inadvertently accommodate and process structurally similar amino acids such as valine, to avoid such errors it has two additional distinct tRNA(Ile)-dependent editing activities. One activity is designated as 'pretransfer' editing and involves the hydrolysis of activated Val-AMP. The other activity is designated 'posttransfer' editing and involves deacylation of mischarged Val-tRNA(Ile). In Chlamydia caviae (strain ATCC VR-813 / DSM 19441 / 03DC25 / GPIC) (Chlamydophila caviae), this protein is Isoleucine--tRNA ligase.